The primary structure comprises 2472 residues: Nuclear receptor corepressor 2 (2472 aa).

Disordered regions lie at residues 1 to 20 (MSGS…PRYP), 47 to 168 (RDYT…SRLS), and 190 to 220 (ISKL…PPIE). Arginine 18 is modified (asymmetric dimethylarginine). Polar residues predominate over residues 51–60 (SHLSPGSIIQ). Residues serine 54 and serine 67 each carry the phosphoserine modification. 2 stretches are compositionally biased toward basic and acidic residues: residues 78–88 (RSQELHLRPES) and 96–112 (GKPD…RLEL). 2 positions are modified to phosphoserine: serine 149 and serine 152. Positions 165 to 207 (SRLSKEELIQNMDRVDREITMVEQQISKLKKKQQQLEEEAAKP) form a coiled coil. Over residues 203–212 (EAAKPPEPEK) the composition is skewed to basic and acidic residues. A Phosphoserine modification is found at serine 215. Positions 254–312 (LPLYNQPSDTRQYHENIKINQAMRKKLILYFKRRNHARKQWEQRFCQRYDQLMEAWEKK) are interaction with SIN3A/B. The deacetylase activation domain (DAD) stretch occupies residues 389 to 480 (MRQLAVIPPM…YLTKKNENYK (92 aa)). The 52-residue stretch at 427–478 (QVTNMWSEQERDTFREKFMQHPKNFGLIASFLERKTVAECVLYYYLTKKNEN) folds into the SANT 1 domain. 1D-myo-inositol 1,4,5,6-tetrakisphosphate is bound by residues lysine 449, tyrosine 470, and tyrosine 471. Disordered stretches follow at residues 487–618 (YRRR…EMET), 665–1107 (HKLK…RPPI), and 1173–1197 (SATS…YRGS). The stretch at 492–560 (KSQQQQQQQQ…GEDNDEKEAV (69 aa)) forms a coiled coil. Phosphoserine is present on serine 493. Positions 494–507 (QQQQQQQQQQQQQQ) are enriched in low complexity. The segment covering 512 to 548 (SQEEKEEKEKEKEADKEEEKQDAENEKEELSKEKTDD) has biased composition (basic and acidic residues). Position 549 is a phosphothreonine (threonine 549). At serine 550 the chain carries Phosphoserine. The segment covering 592 to 609 (ATPQQSSELASMEMNESS) has biased composition (polar residues). An SANT 2 domain is found at 606–657 (NESSRWTEEEMETAKKGLLEHGRNWSAIARMVGSKTVSQCKNFYFNYKKRQN). Residues 658–682 (LDEILQQHKLKMEKERNARRKKKKT) adopt a coiled-coil conformation. The segment covering 709-718 (NEEELAEEAE) has biased composition (acidic residues). Polar residues predominate over residues 739–750 (VNNSSDTESVPS). Serine 747 and serine 750 each carry phosphoserine. 2 stretches are compositionally biased toward pro residues: residues 773–782 (TQPPVPPPEE) and 789–811 (EPSP…PAAP). 2 stretches are compositionally biased toward basic and acidic residues: residues 831-850 (EDAK…KPEE) and 859-868 (ESVKSDHKEE). Position 878 is an N6-acetyllysine (lysine 878). The segment covering 905-919 (GSSSGATQDSDSSAT) has biased composition (low complexity). At serine 938 the chain carries Phosphoserine. Position 945 is a phosphothreonine (threonine 945). Serine 955 is subject to Phosphoserine. At lysine 958 the chain carries N6-acetyllysine. Residues 978–988 (KVHEPPREDTV) are compositionally biased toward basic and acidic residues. Pro residues predominate over residues 989–1000 (PPKPVPPVPPPT). Residues 1090–1101 (LPLGLHDSARPV) are compositionally biased toward low complexity. 2 positions are modified to N6-acetyllysine: lysine 1181 and lysine 1209. Residue serine 1220 is modified to Phosphoserine. Disordered regions lie at residues 1254 to 1277 (SVSQ…AAPK), 1345 to 1378 (LKRE…LKLK), and 1410 to 1443 (PLAP…KHDV). The residue at position 1350 (threonine 1350) is a Phosphothreonine. Positions 1359–1368 (DLTETYKPRP) are enriched in basic and acidic residues. 3 positions are modified to phosphoserine: serine 1449, serine 1509, and serine 1565. The interval 1479 to 1578 (KSRSGTSSGA…TVPEHHPHPI (100 aa)) is disordered. The residue at position 1624 (arginine 1624) is an Asymmetric dimethylarginine. Residues 1734 to 1826 (TAPPPFSSRH…PISPRTQDAL (93 aa)) are disordered. A compositionally biased stretch (low complexity) spans 1740–1753 (SSRHSSSPLSPGGP). Phosphoserine is present on residues serine 1746 and serine 1749. Over residues 1765 to 1778 (SERERERERERDKS) the composition is skewed to basic and acidic residues. Residues 1807–1826 (RPASHTHQHSPISPRTQDAL) are compositionally biased toward polar residues. Serine 1819 carries the post-translational modification Phosphoserine. Arginine 1854 bears the Omega-N-methylarginine mark. 3 disordered regions span residues 1857-1878 (RSTS…THCP), 1898-1986 (KETS…KPFS), and 2001-2078 (AGYS…LQTA). Over residues 1899–1913 (ETSRVARPERPRVDA) the composition is skewed to basic and acidic residues. An N6-acetyllysine modification is found at lysine 1920. A compositionally biased stretch (low complexity) spans 1925–1938 (EPASSPSKSSEPRS). A Phosphoserine modification is found at serine 1963. Lysine 1983 carries the post-translational modification N6-acetyllysine. Residues serine 2004, serine 2012, serine 2015, serine 2016, and serine 2018 each carry the phosphoserine modification. Phosphothreonine is present on threonine 2020. Over residues 2020–2043 (THDKGLSKPLEELEKSHLEGELRH) the composition is skewed to basic and acidic residues. A Phosphoserine modification is found at serine 2035. A compositionally biased stretch (low complexity) spans 2064 to 2075 (LPESQPSSSPLL). The interval 2086-2090 (RVVTL) is required for interaction with RARA in the absence of its ligand. The CORNR box of ID1 signature appears at 2094–2098 (ISEVI). Residues 2132 to 2226 (RRPPSDLYLP…GNTSQPPAFF (95 aa)) are disordered. Serine 2161, serine 2181, and serine 2215 each carry phosphoserine. Positions 2296 to 2300 (LEAII) match the CORNR box of ID2 motif. Residues 2343–2459 (GRSDHALTSP…HHAWDEEPKP (117 aa)) are disordered. A Phosphoserine modification is found at serine 2371. Low complexity predominate over residues 2439 to 2450 (LAAGSGPLAGPH).

It belongs to the N-CoR nuclear receptor corepressors family. Forms a large corepressor complex that contains SIN3A/B and histone deacetylases HDAC1 and HDAC2. This complex associates with the thyroid (TR) and the retinoid acid receptors (RAR) in the absence of ligand, and may stabilize their interaction with TFIIB. Interacts directly with RARA in the absence of ligand; the interaction represses RARA activity. Interacts (isoform SMRT) with HDAC10. Interacts with MINT. Component of the N-Cor repressor complex, at least composed of NCOR1, NCOR2, HDAC3, TBL1X, TBL1R, CORO2A and GPS2. Interacts with CBFA2T3 and ATXN1L. Interacts with RARB; the interaction is weak and does not repress RARB transactivational activity. Interacts (via 1D-myo-inositol 1,4,5,6-tetrakisphosphate) with HDAC3; promoting the histone deacetylase activity of HDAC3. Interacts with HDAC7 and C1D. Interacts with NR4A2; this interaction increases in the absence of PITX3. Interacts with BCL6 (via the BTB domain), required for BCL6 transcriptional repressor activity on a subset of target genes. Forms ternary complexes with BCOR and BCL6 on target gene promoters but, on enhancer elements, interacts with BCL6 and HDAC3 to repress proximal gene expression. May interact with DEAF1. Interacts with RXRA. Interacts with MECP2. Interacts with ZBTB7A. Interacts with AR. Interacts with TBL1Y. Interacts with SANBR (via the BTB domain). As to expression, ubiquitous. Also widely expressed in early embryos.

The protein resides in the nucleus. In terms of biological role, transcriptional corepressor that mediates the transcriptional repression activity of some nuclear receptors by promoting chromatin condensation, thus preventing access of the basal transcription. Acts by recruiting chromatin modifiers, such as histone deacetylases HDAC1, HDAC2 and HDAC3. Required to activate the histone deacetylase activity of HDAC3. Involved in the regulation BCL6-dependent of the germinal center (GC) reactions, mainly through the control of the GC B-cells proliferation and survival. Recruited by ZBTB7A to the androgen response elements/ARE on target genes, negatively regulates androgen receptor signaling and androgen-induced cell proliferation. In Mus musculus (Mouse), this protein is Nuclear receptor corepressor 2 (Ncor2).